Here is a 432-residue protein sequence, read N- to C-terminus: Adenylosuccinate synthetase (432 aa).

GTP contacts are provided by residues 13-19 (GDEGKGK) and 41-43 (GHT). Residue aspartate 14 is the Proton acceptor of the active site. 2 residues coordinate Mg(2+): aspartate 14 and glycine 41. IMP is bound by residues 14-17 (DEGK), 39-42 (NAGH), threonine 130, arginine 144, glutamine 225, threonine 240, and arginine 304. Residue histidine 42 is the Proton donor of the active site. 300 to 306 (ATTGRSR) is a binding site for substrate. GTP is bound by residues arginine 306, 332 to 334 (KLD), and 415 to 417 (STG).

The protein belongs to the adenylosuccinate synthetase family. As to quaternary structure, homodimer. The cofactor is Mg(2+).

The protein localises to the cytoplasm. It carries out the reaction IMP + L-aspartate + GTP = N(6)-(1,2-dicarboxyethyl)-AMP + GDP + phosphate + 2 H(+). The protein operates within purine metabolism; AMP biosynthesis via de novo pathway; AMP from IMP: step 1/2. Plays an important role in the de novo pathway of purine nucleotide biosynthesis. Catalyzes the first committed step in the biosynthesis of AMP from IMP. This is Adenylosuccinate synthetase from Yersinia enterocolitica serotype O:8 / biotype 1B (strain NCTC 13174 / 8081).